The chain runs to 255 residues: 3-oxoacyl-[acyl-carrier-protein] reductase MabA (255 aa).

NADP(+) contacts are provided by residues Arg-33 to Ile-35, Arg-55, Asp-69 to Val-70, Gly-98, Tyr-161, Lys-165, Ile-194, and Arg-205. Tyr-161 (proton acceptor) is an active-site residue.

It belongs to the short-chain dehydrogenases/reductases (SDR) family. In terms of assembly, homotetramer.

It is found in the secreted. The protein resides in the cell wall. The enzyme catalyses a (3R)-hydroxyacyl-[ACP] + NADP(+) = a 3-oxoacyl-[ACP] + NADPH + H(+). Its pathway is lipid metabolism; mycolic acid biosynthesis. Functionally, part of the mycobacterial fatty acid elongation system FAS-II, which is involved in mycolic acid biosynthesis. Catalyzes the NADPH-dependent reduction of beta-ketoacyl derivatives, the second step of the FAS-II elongation cycle. This is 3-oxoacyl-[acyl-carrier-protein] reductase MabA from Mycobacterium avium.